Consider the following 281-residue polypeptide: Lectin CaBo (281 aa).

An N-terminal signal peptide occupies residues 1 to 29 (MAISKKSSLYLPIFTFITMLLMVVNKVSS). D119 contributes to the Ca(2+) binding site. R139 lines the a carbohydrate pocket. A propeptide spans 149 to 163 (IIKNSTTIDFNAAYN) (removed in mature form). The Mn(2+) site is built by E171 and D173. Residues D173, Y175, N177, and D182 each contribute to the Ca(2+) site. A carbohydrate is bound at residue Y175. Mn(2+)-binding residues include D182 and H187. 262-263 (LY) contacts a carbohydrate.

It belongs to the leguminous lectin family. In terms of assembly, equilibrium between homodimer and homotetramer. Post-translationally, the mature chain consists of residues 164-281 followed by residues 30-148. Concanavalin A-like lectins of the Diocleinae subtribe undergo proteolytic processing referred to as circular permutation. The propeptide is split into an N-terminal and a C-terminal part, the gamma and beta chain, respectively. These are then religated in beta-gamma order to form the mature alpha chain. The beta and gamma chains can often be detected in cell extracts.

In terms of biological role, D-mannose-specific lectin. This Canavalia bonariensis protein is Lectin CaBo.